The following is a 265-amino-acid chain: NAD kinase (265 aa).

Asp45 functions as the Proton acceptor in the catalytic mechanism. Residues 45–46 (DG), 122–123 (NE), Arg148, Asp150, 161–166 (TAYNKS), Ala185, and Gln223 contribute to the NAD(+) site.

It belongs to the NAD kinase family. It depends on a divalent metal cation as a cofactor.

It is found in the cytoplasm. The catalysed reaction is NAD(+) + ATP = ADP + NADP(+) + H(+). Involved in the regulation of the intracellular balance of NAD and NADP, and is a key enzyme in the biosynthesis of NADP. Catalyzes specifically the phosphorylation on 2'-hydroxyl of the adenosine moiety of NAD to yield NADP. The protein is NAD kinase of Enterococcus faecalis (strain ATCC 700802 / V583).